A 157-amino-acid chain; its full sequence is tRNA (cytidine(34)-2'-O)-methyltransferase (157 aa).

Positions 78, 100, 122, and 130 each coordinate S-adenosyl-L-methionine.

It belongs to the class IV-like SAM-binding methyltransferase superfamily. RNA methyltransferase TrmH family. TrmL subfamily. As to quaternary structure, homodimer.

The protein resides in the cytoplasm. The catalysed reaction is cytidine(34) in tRNA + S-adenosyl-L-methionine = 2'-O-methylcytidine(34) in tRNA + S-adenosyl-L-homocysteine + H(+). It carries out the reaction 5-carboxymethylaminomethyluridine(34) in tRNA(Leu) + S-adenosyl-L-methionine = 5-carboxymethylaminomethyl-2'-O-methyluridine(34) in tRNA(Leu) + S-adenosyl-L-homocysteine + H(+). Functionally, methylates the ribose at the nucleotide 34 wobble position in the two leucyl isoacceptors tRNA(Leu)(CmAA) and tRNA(Leu)(cmnm5UmAA). Catalyzes the methyl transfer from S-adenosyl-L-methionine to the 2'-OH of the wobble nucleotide. This chain is tRNA (cytidine(34)-2'-O)-methyltransferase, found in Escherichia coli O6:H1 (strain CFT073 / ATCC 700928 / UPEC).